Consider the following 84-residue polypeptide: Small ribosomal subunit protein uS17 (84 aa).

This sequence belongs to the universal ribosomal protein uS17 family. In terms of assembly, part of the 30S ribosomal subunit.

One of the primary rRNA binding proteins, it binds specifically to the 5'-end of 16S ribosomal RNA. This Treponema pallidum (strain Nichols) protein is Small ribosomal subunit protein uS17.